A 249-amino-acid polypeptide reads, in one-letter code: 2,3-bisphosphoglycerate-dependent phosphoglycerate mutase (249 aa).

Residues 9 to 16 (RHGQSQWN), 22 to 23 (TG), R61, 88 to 91 (ERHY), K99, 115 to 116 (RR), and 184 to 185 (GN) each bind substrate. H10 serves as the catalytic Tele-phosphohistidine intermediate. E88 (proton donor/acceptor) is an active-site residue.

Belongs to the phosphoglycerate mutase family. BPG-dependent PGAM subfamily. Homodimer.

The enzyme catalyses (2R)-2-phosphoglycerate = (2R)-3-phosphoglycerate. Its pathway is carbohydrate degradation; glycolysis; pyruvate from D-glyceraldehyde 3-phosphate: step 3/5. In terms of biological role, catalyzes the interconversion of 2-phosphoglycerate and 3-phosphoglycerate. The sequence is that of 2,3-bisphosphoglycerate-dependent phosphoglycerate mutase from Xylella fastidiosa (strain M23).